We begin with the raw amino-acid sequence, 268 residues long: Undecaprenyl-diphosphatase (268 aa).

Transmembrane regions (helical) follow at residues 47-67, 85-105, 109-129, 144-164, 184-204, 217-237, and 246-266; these read FAVLIQLGAILAILALYFSKL, IGVLVAFLPAAVIGAASGGLI, LFNPWVVCFTLILGGGILLWV, FPLPMYLIIGFAQCIAMFPGV, AAEFSFFLAIPTMLGAFVYDL, LIVAVGFAVSFITAIIVVKTF, and FALFAWWRVIVGTLGLIALAL.

This sequence belongs to the UppP family.

The protein resides in the cell inner membrane. The catalysed reaction is di-trans,octa-cis-undecaprenyl diphosphate + H2O = di-trans,octa-cis-undecaprenyl phosphate + phosphate + H(+). Its function is as follows. Catalyzes the dephosphorylation of undecaprenyl diphosphate (UPP). Confers resistance to bacitracin. The sequence is that of Undecaprenyl-diphosphatase from Rhodopseudomonas palustris (strain BisA53).